A 156-amino-acid chain; its full sequence is Small ribosomal subunit protein uS7 (156 aa).

This sequence belongs to the universal ribosomal protein uS7 family. In terms of assembly, part of the 30S ribosomal subunit. Contacts proteins S9 and S11.

Functionally, one of the primary rRNA binding proteins, it binds directly to 16S rRNA where it nucleates assembly of the head domain of the 30S subunit. Is located at the subunit interface close to the decoding center, probably blocks exit of the E-site tRNA. This Mycobacterium bovis (strain ATCC BAA-935 / AF2122/97) protein is Small ribosomal subunit protein uS7.